Here is a 75-residue protein sequence, read N- to C-terminus: Small ribosomal subunit protein bS18 (75 aa).

Belongs to the bacterial ribosomal protein bS18 family. In terms of assembly, part of the 30S ribosomal subunit. Forms a tight heterodimer with protein bS6.

Its function is as follows. Binds as a heterodimer with protein bS6 to the central domain of the 16S rRNA, where it helps stabilize the platform of the 30S subunit. This chain is Small ribosomal subunit protein bS18, found in Clostridioides difficile (strain 630) (Peptoclostridium difficile).